A 469-amino-acid polypeptide reads, in one-letter code: Argininosuccinate lyase (469 aa).

Belongs to the lyase 1 family. Argininosuccinate lyase subfamily.

It localises to the cytoplasm. It catalyses the reaction 2-(N(omega)-L-arginino)succinate = fumarate + L-arginine. Its pathway is amino-acid biosynthesis; L-arginine biosynthesis; L-arginine from L-ornithine and carbamoyl phosphate: step 3/3. This Paracoccus denitrificans (strain Pd 1222) protein is Argininosuccinate lyase.